We begin with the raw amino-acid sequence, 694 residues long: Frizzled-2 (694 aa).

Residues 1–22 form the signal peptide; the sequence is MRHNRLKVLILGLVLLLTSCRA. Residues 23–315 lie on the Extracellular side of the membrane; the sequence is DGPLHSADHG…GPFFSNDEKD (293 aa). Residues 59–180 form the FZ domain; it reads DPNLRCEEIT…GDPDNLCMEQ (122 aa). Cystine bridges form between Cys-64–Cys-125, Cys-72–Cys-118, Cys-109–Cys-147, Cys-136–Cys-177, and Cys-140–Cys-164. Asn-78 carries an N-linked (GlcNAc...) asparagine glycan. The segment at 175-253 is disordered; sequence NLCMEQPSYT…QGEKASGKEC (79 aa). A compositionally biased stretch (gly residues) spans 187 to 224; sequence GSGGSSGGSGGSGSGSGSGGKRKQGGSGSGGSGAGGSS. A glycan (N-linked (GlcNAc...) asparagine) is linked at Asn-288. The helical transmembrane segment at 316-336 threads the bilayer; the sequence is FAGLWIALWSGLCFCSTLMTL. The Cytoplasmic portion of the chain corresponds to 337-352; the sequence is TTFIIDTERFKYPERP. The helical transmembrane segment at 353 to 373 threads the bilayer; sequence IVFLSACYFMVAVGYLSRNFL. The Extracellular segment spans residues 374–397; that stretch reads QNEEIACDGLLLRESSTGPHSCTL. The helical transmembrane segment at 398 to 418 threads the bilayer; it reads VFLLTYFFGMASSIWWVILSF. Topologically, residues 419-439 are cytoplasmic; it reads TWFLAAGLKWGNEAITKHSQY. A helical transmembrane segment spans residues 440–460; it reads FHLAAWLIPTVQSVAVLLLSA. Residues 461–482 are Extracellular-facing; that stretch reads VDGDPILGICYVGNLNPDHLKT. The chain crosses the membrane as a helical span at residues 483 to 503; the sequence is FVLAPLFVYLVIGTTFLMAGF. The Cytoplasmic segment spans residues 504–534; the sequence is VSLFRIRSVIKQQGGVGAGVKADKLEKLMIR. The helical transmembrane segment at 535 to 555 threads the bilayer; it reads IGIFSVLYTVPATIVIGCYLY. The Extracellular segment spans residues 556–584; it reads EAAYFEDWIKALACPCAQVKGPGKKPLYS. A helical transmembrane segment spans residues 585 to 605; the sequence is VLMLKYFMALAVGITSGVWIW. At 606 to 694 the chain is on the cytoplasmic side; that stretch reads SGKTLESWRR…VLKQPAASHV (89 aa). Residues 608-613 carry the Lys-Thr-X-X-X-Trp motif, mediates interaction with the PDZ domain of Dvl family members motif; sequence KTLESW. A PDZ-binding motif is present at residues 692-694; it reads SHV.

This sequence belongs to the G-protein coupled receptor Fz/Smo family. Interacts with ATP6AP2.

It is found in the cell membrane. In terms of biological role, receptor for Wnt proteins. Most of frizzled receptors are coupled to the beta-catenin canonical signaling pathway, which leads to the activation of disheveled proteins, inhibition of GSK-3 kinase, nuclear accumulation of beta-catenin and activation of Wnt target genes. A second signaling pathway involving PKC and calcium fluxes has been seen for some family members, but it is not yet clear if it represents a distinct pathway or if it can be integrated in the canonical pathway, as PKC seems to be required for Wnt-mediated inactivation of GSK-3 kinase. Both pathways seem to involve interactions with G-proteins. Required to coordinate the cytoskeletons of epidermal cells to produce a parallel array of cuticular hairs and bristles. This chain is Frizzled-2 (fz2), found in Drosophila melanogaster (Fruit fly).